The sequence spans 247 residues: Triosephosphate isomerase (247 aa).

Substrate contacts are provided by Asn-10 and Lys-12. His-95 (electrophile) is an active-site residue. The active-site Proton acceptor is the Glu-165.

The protein belongs to the triosephosphate isomerase family. In terms of assembly, homodimer.

It catalyses the reaction D-glyceraldehyde 3-phosphate = dihydroxyacetone phosphate. It participates in carbohydrate biosynthesis; gluconeogenesis. The protein operates within carbohydrate degradation; glycolysis; D-glyceraldehyde 3-phosphate from glycerone phosphate: step 1/1. This Yarrowia lipolytica (strain CLIB 122 / E 150) (Yeast) protein is Triosephosphate isomerase (TPI1).